A 173-amino-acid polypeptide reads, in one-letter code: Mesencephalic astrocyte-derived neurotrophic factor homolog (173 aa).

Residues 1–22 (MKTTHLVLVLCFLAGVAQTTLA) form the signal peptide. Cystine bridges form between C28–C114, C31–C103, C61–C72, and C148–C151.

Belongs to the ARMET family.

It is found in the secreted. Its function is as follows. Required during the maturation of the embryonic nervous system for maintenance of neuronal and cuticular connectivity. Essential for maintenance of dopaminergic neurons and dopamine levels. The sequence is that of Mesencephalic astrocyte-derived neurotrophic factor homolog from Drosophila persimilis (Fruit fly).